The chain runs to 1094 residues: Formin-like protein 1 (1094 aa).

Disordered stretches follow at residues 1–29, 173–199, and 507–627; these read MGNA…KQPM, SGAE…VPKS, and AATP…GVKA. G2 carries N-myristoyl glycine lipidation. Position 7 is a phosphoserine (S7). A compositionally biased stretch (pro residues) spans 16-28; sequence ASPPKQPAVPKQP. In terms of domain architecture, GBD/FH3 spans 27–464; the sequence is QPMPAAGELE…SRRIPEPEKV (438 aa). S184 is modified (phosphoserine). Polar residues predominate over residues 519–529; that stretch reads RVSTDSPSTAE. Composition is skewed to pro residues over residues 535-549 and 559-610; these read ASPP…PPLP and PSAP…PGGP. The FH2 domain occupies 627–1018; sequence AKKPIQTKFR…DTSGREEPPT (392 aa). The residue at position 688 (S688) is a Phosphoserine. Positions 1002–1017 are enriched in basic and acidic residues; the sequence is WKKEAAADTSGREEPP. A disordered region spans residues 1002–1094; sequence WKKEAAADTS…PLPVTTDLAL (93 aa). S1021 carries the phosphoserine modification. The DAD domain occupies 1049–1082; that stretch reads SDRDGAIEDIITDLRNQPYIRADTGRRSARRRPP.

It belongs to the formin homology family. As to quaternary structure, interacts with RAC1, PFN1 and PFN2. Interacts (activated by RAC1) with SRGAP2 (via SH3 domain); regulates the actin filament severing activity of FMNL1. In terms of processing, myristoylation mediates membrane localization. Highly expressed in the spleen, lymph node and bone marrow cells.

The protein resides in the cytoplasm. It localises to the cell membrane. The protein localises to the cytoplasmic vesicle. It is found in the phagosome. In terms of biological role, plays a role in the regulation of cell morphology and cytoskeletal organization. Required in the cortical actin filament dynamics and cell shape. May play a role in the control of cell motility and survival of macrophages. The sequence is that of Formin-like protein 1 (Fmnl1) from Mus musculus (Mouse).